Reading from the N-terminus, the 380-residue chain is 1-deoxy-D-xylulose 5-phosphate reductoisomerase (380 aa).

NADPH-binding residues include Thr-10, Gly-11, Ser-12, Ile-13, Gly-36, Arg-37, Asn-38, and Asn-120. Lys-121 lines the 1-deoxy-D-xylulose 5-phosphate pocket. Glu-122 serves as a coordination point for NADPH. Asp-146 contacts Mn(2+). Positions 147, 148, 172, and 195 each coordinate 1-deoxy-D-xylulose 5-phosphate. A Mn(2+)-binding site is contributed by Glu-148. Gly-201 contacts NADPH. The 1-deoxy-D-xylulose 5-phosphate site is built by Ser-208, Asn-213, Lys-214, and Glu-217. Glu-217 serves as a coordination point for Mn(2+).

The protein belongs to the DXR family. Requires Mg(2+) as cofactor. The cofactor is Mn(2+).

It catalyses the reaction 2-C-methyl-D-erythritol 4-phosphate + NADP(+) = 1-deoxy-D-xylulose 5-phosphate + NADPH + H(+). Its pathway is isoprenoid biosynthesis; isopentenyl diphosphate biosynthesis via DXP pathway; isopentenyl diphosphate from 1-deoxy-D-xylulose 5-phosphate: step 1/6. Catalyzes the NADPH-dependent rearrangement and reduction of 1-deoxy-D-xylulose-5-phosphate (DXP) to 2-C-methyl-D-erythritol 4-phosphate (MEP). The polypeptide is 1-deoxy-D-xylulose 5-phosphate reductoisomerase (Listeria monocytogenes serovar 1/2a (strain ATCC BAA-679 / EGD-e)).